A 419-amino-acid chain; its full sequence is 4-hydroxyphenylpyruvate dioxygenase (419 aa).

2 VOC domains span residues Gly-41 to Arg-187 and Ala-218 to Lys-376. Residues His-221, His-304, and Glu-387 each contribute to the Fe cation site.

Belongs to the 4HPPD family. Fe cation is required as a cofactor.

It carries out the reaction 3-(4-hydroxyphenyl)pyruvate + O2 = homogentisate + CO2. It functions in the pathway amino-acid degradation; L-phenylalanine degradation; acetoacetate and fumarate from L-phenylalanine: step 3/6. This chain is 4-hydroxyphenylpyruvate dioxygenase (HPPD), found in Zymoseptoria tritici (Speckled leaf blotch fungus).